The primary structure comprises 77 residues: Putative defensin-like protein 118 (77 aa).

An N-terminal signal peptide occupies residues 1–25 (MSKSTILAIFMIVLVLGKVTKETQG). Cystine bridges form between cysteine 29/cysteine 75, cysteine 39/cysteine 58, cysteine 44/cysteine 69, and cysteine 48/cysteine 71.

Belongs to the DEFL family.

Its subcellular location is the secreted. This Arabidopsis thaliana (Mouse-ear cress) protein is Putative defensin-like protein 118 (LCR52).